A 345-amino-acid polypeptide reads, in one-letter code: Uroporphyrinogen decarboxylase (345 aa).

Substrate contacts are provided by residues 27 to 31 (RQAGR), Phe-46, Asp-76, Tyr-152, Ser-207, and His-320.

It belongs to the uroporphyrinogen decarboxylase family. As to quaternary structure, homodimer.

It localises to the cytoplasm. It catalyses the reaction uroporphyrinogen III + 4 H(+) = coproporphyrinogen III + 4 CO2. It participates in porphyrin-containing compound metabolism; protoporphyrin-IX biosynthesis; coproporphyrinogen-III from 5-aminolevulinate: step 4/4. Functionally, catalyzes the decarboxylation of four acetate groups of uroporphyrinogen-III to yield coproporphyrinogen-III. The polypeptide is Uroporphyrinogen decarboxylase (Geobacillus kaustophilus (strain HTA426)).